We begin with the raw amino-acid sequence, 310 residues long: Oxygen-dependent coproporphyrinogen-III oxidase (310 aa).

Residue S97 participates in substrate binding. 2 residues coordinate a divalent metal cation: H101 and H111. H111 serves as the catalytic Proton donor. 113–115 provides a ligand contact to substrate; the sequence is NFR. A divalent metal cation-binding residues include H150 and H180. The segment at 245 to 280 is important for dimerization; the sequence is YVEFNLLYDRGTRFGLEFGGRTESILMSLPPRVVWR. 263-265 is a binding site for substrate; that stretch reads GGR.

This sequence belongs to the aerobic coproporphyrinogen-III oxidase family. In terms of assembly, homodimer. The cofactor is a divalent metal cation.

It localises to the cytoplasm. It catalyses the reaction coproporphyrinogen III + O2 + 2 H(+) = protoporphyrinogen IX + 2 CO2 + 2 H2O. It functions in the pathway porphyrin-containing compound metabolism; protoporphyrin-IX biosynthesis; protoporphyrinogen-IX from coproporphyrinogen-III (O2 route): step 1/1. Its function is as follows. Involved in the heme biosynthesis. Catalyzes the aerobic oxidative decarboxylation of propionate groups of rings A and B of coproporphyrinogen-III to yield the vinyl groups in protoporphyrinogen-IX. The chain is Oxygen-dependent coproporphyrinogen-III oxidase from Coxiella burnetii (strain RSA 493 / Nine Mile phase I).